The following is a 509-amino-acid chain: Src substrate cortactin (509 aa).

Positions 1–28 (MWKASAGHAVSITQDDGGADDWETDPDF) are disordered. A compositionally biased stretch (acidic residues) spans 17–28 (GGADDWETDPDF). Cortactin repeat units lie at residues 80–116 (ASHG…SQVD), 117–153 (SVRG…SQKD), 154–190 (YSSG…SQKD), 191–227 (YSKG…SQKD), and 228–264 (YVKG…SQKD). N6-acetyllysine occurs at positions 87 and 107. Phosphoserine is present on S113. R119 carries the omega-N-methylarginine modification. K124 bears the N6-acetyllysine mark. N6-acetyllysine; alternate is present on K144. Residue K144 forms a Glycyl lysine isopeptide (Lys-Gly) (interchain with G-Cter in SUMO1); alternate linkage. K144 is covalently cross-linked (Glycyl lysine isopeptide (Lys-Gly) (interchain with G-Cter in SUMO2); alternate). At S150 the chain carries Phosphoserine. K152, K161, and K171 each carry N6-acetyllysine. K181 carries the N6-acetyllysine; alternate modification. K181 participates in a covalent cross-link: Glycyl lysine isopeptide (Lys-Gly) (interchain with G-Cter in SUMO1); alternate. K181 is covalently cross-linked (Glycyl lysine isopeptide (Lys-Gly) (interchain with G-Cter in SUMO2); alternate). N6-acetyllysine occurs at positions 193 and 198. Residue K218 forms a Glycyl lysine isopeptide (Lys-Gly) (interchain with G-Cter in SUMO1) linkage. The residue at position 235 (K235) is an N6-acetyllysine. Residue S261 is modified to Phosphoserine. A Cortactin 6; truncated repeat occupies 265–287 (YAKGFGGKYGVQKDRMDKNASTF). 4 positions are modified to N6-acetyllysine: K267, K272, K277, and K309. The stretch at 311-364 (SNIRANFENLAKEREQEDRRKAEAERAQRMAQERQEQEEARRKLEEQARAKKQT) forms a coiled coil. A disordered region spans residues 318–409 (ENLAKEREQE…EPEPEYSTEA (92 aa)). Over residues 320 to 359 (LAKEREQEDRRKAEAERAQRMAQERQEQEEARRKLEEQAR) the composition is skewed to basic and acidic residues. Residue T364 is modified to Phosphothreonine. 4 positions are modified to phosphoserine: S368, S370, S380, and S381. The residue at position 384 (Y384) is a Phosphotyrosine; by FAK1. Low complexity predominate over residues 393–406 (EPSYGSSEPEPEYS). Y405 is subject to Phosphotyrosine. A Phosphoserine modification is found at S406. Phosphotyrosine; by FAK1 occurs at positions 429 and 445. A phosphotyrosine; by SRC mark is found at Y445 and Y448. The SH3 domain maps to 451–509 (DLGITAIALYDYQAAGDDEISFDPDDVITNIEMIDDGWWRGVCKGRYGLFPANYVELRQ).

In terms of assembly, part of a complex composed of NEDD9, AURKA and CTTN; within the complex NEDD9 acts as a scaffold protein and is required for complex formation. Interacts (via N-terminus) with NEDD9. Identified in a complex containing FGFR4, NCAM1, CDH2, PLCG1, FRS2, SRC, SHC1, GAP43 and CTTN. Forms a complex with ABL1 and MYLK. Interacts with SHANK2 and SHANK3 (via its SH3 domain). Interacts with PLXDC2 and SRCIN1. Interacts with SAMSN1 (via SH3 domain). Interacts (via SH3 domain) with ASAP1 (via Pro-rich region). Interacts with FER. Interacts with FGD1. Interacts with ABL2. Interacts with CTTNBP2NL; this interaction may target CTTN to stress fibers. Interacts with CTTNBP2; this interaction may target CTTN at the cell cortex or dendritic spines. Interacts (via SH3 domain) with DNM2. Interacts with ACTN1. Interacts with KCNA2 (via non-phosphorylated C-terminus). Interacts with PTK2/FAK1. Interacts with KCNH1. Interacts (via SH3 domain) with DIP2A (via N-terminus); the interaction enhances CTTN acetylation and is required for proper synaptic transmission. Interacts with XIRP1 (via N-terminus); the interaction promotes CTTN localization to intercalated disks in cardiomyocytes. Acetylated. Post-translationally, phosphorylated by FER. Phosphorylated in response to FGR activation. Phosphorylation by SRC promotes MYLK binding. Tyrosine phosphorylation in transformed cells may contribute to cellular growth regulation and transformation. Phosphorylated by PKN2 at both serine and threonine residues in a GTP-bound Rac1-dependent manner in hyaluronan-induced astrocytes and hence down-regulated CTTN ability to associate with filamentous actin. Phosphorylated on tyrosine residues in response to CHRM1 activation. Phosphorylated by PTK2/FAK1 in response to cell adhesion. As to expression, detected in liver (at protein level).

The protein resides in the cytoplasm. Its subcellular location is the cytoskeleton. The protein localises to the cell projection. It localises to the lamellipodium. It is found in the ruffle. The protein resides in the dendrite. Its subcellular location is the cell membrane. The protein localises to the podosome. It localises to the cell junction. It is found in the focal adhesion. The protein resides in the membrane. Its subcellular location is the clathrin-coated pit. The protein localises to the dendritic spine. It localises to the cell cortex. It is found in the endoplasmic reticulum. In terms of biological role, contributes to the organization of the actin cytoskeleton and cell shape. Plays a role in the formation of lamellipodia and in cell migration. Plays a role in the regulation of neuron morphology, axon growth and formation of neuronal growth cones. Through its interaction with CTTNBP2, involved in the regulation of neuronal spine density. Plays a role in focal adhesion assembly and turnover. In complex with ABL1 and MYLK regulates cortical actin-based cytoskeletal rearrangement critical to sphingosine 1-phosphate (S1P)-mediated endothelial cell (EC) barrier enhancement. Plays a role in intracellular protein transport and endocytosis, and in modulating the levels of potassium channels present at the cell membrane. Plays a role in receptor-mediated endocytosis via clathrin-coated pits. Required for stabilization of KCNH1 channels at the cell membrane. This is Src substrate cortactin from Rattus norvegicus (Rat).